The following is a 348-amino-acid chain: Rhodopsin (348 aa).

The Extracellular segment spans residues 1–33; the sequence is TEGPYFYIPMVNTTGIVRSPYEYPQYYLVNPAA. N-linked (GlcNAc...) asparagine glycosylation is present at asparagine 12. The helical transmembrane segment at 34-58 threads the bilayer; that stretch reads YAMLGAYMFFLIIVGFPVNFMTLYV. At 59–70 the chain is on the cytoplasmic side; it reads TLEHKKLRTPLN. A helical transmembrane segment spans residues 71–93; it reads YILLNLAVADLFMVIGGFTTTIY. Residues 94–107 lie on the Extracellular side of the membrane; sequence TSMHGYFVLGRLGC. A disulfide bridge connects residues cysteine 107 and cysteine 184. Residues 108-130 traverse the membrane as a helical segment; it reads NIEGFFATLGGMISLWSLAVLAI. The short motif at 131–133 is the 'Ionic lock' involved in activated form stabilization element; it reads ERW. Topologically, residues 131 to 149 are cytoplasmic; the sequence is ERWVVVCKPISNFRFGENH. Residues 150-170 form a helical membrane-spanning segment; it reads AIMGVSLTWAMALACTVPPLV. Residues 171 to 199 lie on the Extracellular side of the membrane; the sequence is GWSRYIPEGMQCSCGIDYYTRAEGFNNES. Asparagine 197 carries N-linked (GlcNAc...) asparagine glycosylation. The helical transmembrane segment at 200-221 threads the bilayer; the sequence is FVLYMFFCHFTIPLTIIFFCYG. Residues 222–249 are Cytoplasmic-facing; the sequence is RLLCAVKEAAAAQQESETTQRAEREVTR. A helical membrane pass occupies residues 250-271; the sequence is MVIIMVIGFLICWLPYASVAWF. Topologically, residues 272-283 are extracellular; the sequence is IFTHQGSEFGPL. Residues 284–305 form a helical membrane-spanning segment; it reads FMTIPAFFAKSSSIYNPMIYIC. Lysine 293 is subject to N6-(retinylidene)lysine. Residues 306 to 348 lie on the Cytoplasmic side of the membrane; it reads MNKQFRHCMITTLFCGKNPFEGEEEGASSTKTEASSASSVSPA. Residue cysteine 320 is the site of S-palmitoyl cysteine attachment. A disordered region spans residues 327–348; that stretch reads GEEEGASSTKTEASSASSVSPA. A compositionally biased stretch (low complexity) spans 332–348; that stretch reads ASSTKTEASSASSVSPA.

It belongs to the G-protein coupled receptor 1 family. Opsin subfamily. Phosphorylated on some or all of the serine and threonine residues present in the C-terminal region. Post-translationally, contains one covalently linked retinal chromophore.

The protein localises to the membrane. It is found in the cell projection. The protein resides in the cilium. It localises to the photoreceptor outer segment. Its function is as follows. Photoreceptor required for image-forming vision at low light intensity. While most salt water fish species use retinal as chromophore, most freshwater fish use 3-dehydroretinal, or a mixture of retinal and 3-dehydroretinal. Light-induced isomerization of 11-cis to all-trans retinal triggers a conformational change that activates signaling via G-proteins. Subsequent receptor phosphorylation mediates displacement of the bound G-protein alpha subunit by arrestin and terminates signaling. This Sargocentron microstoma (Smallmouth squirrelfish) protein is Rhodopsin (rho).